Reading from the N-terminus, the 457-residue chain is Glutamate--tRNA ligase 2 (457 aa).

Positions 8 to 18 (PSPTGYIHIGN) match the 'HIGH' region motif. A 'KMSKS' region motif is present at residues 249 to 253 (GFSKR). Lysine 252 contacts ATP.

It belongs to the class-I aminoacyl-tRNA synthetase family. Glutamate--tRNA ligase type 1 subfamily. In terms of assembly, monomer.

It localises to the cytoplasm. The catalysed reaction is tRNA(Glu) + L-glutamate + ATP = L-glutamyl-tRNA(Glu) + AMP + diphosphate. In terms of biological role, catalyzes the attachment of glutamate to tRNA(Glu) in a two-step reaction: glutamate is first activated by ATP to form Glu-AMP and then transferred to the acceptor end of tRNA(Glu). In Bartonella tribocorum (strain CIP 105476 / IBS 506), this protein is Glutamate--tRNA ligase 2.